The following is a 675-amino-acid chain: MDTKSILEELLLKRSQQKKKMSPNNYKERLFVLTKTNLSYYEYDKMKRGSRKGSIEIKKIRCVEKVNLEEQTPVERQYPFQIVYKDGLLYVYASNEESRSQWLKALQKEIRGNPHLLVKYHSGFFVDGKFLCCQQSCKAAPGCTLWEAYANLHTAVNEEKHRVPTFPDRVLKIPRAVPVLKMDAPSSSTTLAQYDNESKKNYGSQPPSSSTSLAQYDSNSKKIYGSQPNFNMQYIPREDFPDWWQVRKLKSSSSSEDVASSNQKERNVNHTTSKISWEFPESSSSEEEENLDDYDWFAGNISRSQSEQLLRQKGKEGAFMVRNSSQVGMYTVSLFSKAVNDKKGTVKHYHVHTNAENKLYLAENYCFDSIPKLIHYHQHNSAGMITRLRHPVSTKANKVPDSVSLGNGIWELKREEITLLKELGSGQFGVVQLGKWKGQYDVAVKMIKEGSMSEDEFFQEAQTMMKLSHPKLVKFYGVCSKEYPIYIVTEYISNGCLLNYLRSHGKGLEPSQLLEMCYDVCEGMAFLESHQFIHRDLAARNCLVDRDLCVKVSDFGMTRYVLDDQYVSSVGTKFPVKWSAPEVFHYFKYSSKSDVWAFGILMWEVFSLGKQPYDLYDNSQVVLKVSQGHRLYRPHLASDTIYQIMYSCWHELPEKRPTFQQLLSSIEPLREKDKH.

One can recognise a PH domain in the interval Lys4–Arg111. Residues Asn113–Tyr149 form a Btk-type zinc finger. Residues His121, Cys132, Cys133, and Cys143 each coordinate Zn(2+). A phosphotyrosine; by autocatalysis mark is found at Tyr216 and Tyr224. The SH2 domain occupies Trp296–Val392. Residues Ile417 to His675 form the Protein kinase domain. Residues Leu423–Val431 and Lys445 each bind ATP. Asp536 functions as the Proton acceptor in the catalytic mechanism. At Tyr566 the chain carries Phosphotyrosine; by SRC and autocatalysis. Positions Trp596–Trp603 match the CAV1-binding motif.

It belongs to the protein kinase superfamily. Tyr protein kinase family. TEC subfamily. As to quaternary structure, interacts with BCAR1, CAV1, MYD88, PTK2/FAK1, RUFY1, RUFY2, STAT3, TIRAP and TNFRSF1B. Zn(2+) serves as cofactor. Post-translationally, phosphorylated in response to protein I/II and to LPS. Phosphorylation at Tyr-566 by SRC and by autocatalysis leads to activation and is required for STAT3 phosphorylation by BMX. Highly expressed in cells with great migratory potential, including endothelial cells and metastatic carcinoma cell lines.

Its subcellular location is the cytoplasm. The enzyme catalyses L-tyrosyl-[protein] + ATP = O-phospho-L-tyrosyl-[protein] + ADP + H(+). With respect to regulation, TEK and vascular endothelial growth factor receptor 1 (FLT1) stimulate BMX tyrosine kinase activity. Activated by integrins through the mediation of PTK2/FAK1. Activated by TNF through the mediation of TNFRSF1B. In terms of biological role, non-receptor tyrosine kinase that plays central but diverse modulatory roles in various signaling processes involved in the regulation of actin reorganization, cell migration, cell proliferation and survival, cell adhesion, and apoptosis. Participates in signal transduction stimulated by growth factor receptors, cytokine receptors, G-protein coupled receptors, antigen receptors and integrins. Induces tyrosine phosphorylation of BCAR1 in response to integrin regulation. Activation of BMX by integrins is mediated by PTK2/FAK1, a key mediator of integrin signaling events leading to the regulation of actin cytoskeleton and cell motility. Plays a critical role in TNF-induced angiogenesis, and implicated in the signaling of TEK and FLT1 receptors, 2 important receptor families essential for angiogenesis. Required for the phosphorylation and activation of STAT3, a transcription factor involved in cell differentiation. Also involved in interleukin-6 (IL6) induced differentiation. Also plays a role in programming adaptive cytoprotection against extracellular stress in different cell systems, salivary epithelial cells, brain endothelial cells, and dermal fibroblasts. May be involved in regulation of endocytosis through its interaction with an endosomal protein RUFY1. May also play a role in the growth and differentiation of hematopoietic cells; as well as in signal transduction in endocardial and arterial endothelial cells. The chain is Cytoplasmic tyrosine-protein kinase BMX (BMX) from Homo sapiens (Human).